Here is a 135-residue protein sequence, read N- to C-terminus: Lymphocyte antigen 6B (135 aa).

The signal sequence occupies residues 1–26 (MNRSCAMKSCVLILLLALLCAERAQG). Positions 27–119 (LNCYNCTMIP…PTGGSTWTMA (93 aa)) constitute a UPAR/Ly6 domain. 5 cysteine pairs are disulfide-bonded: Cys29–Cys54, Cys32–Cys41, Cys47–Cys75, Cys79–Cys99, and Cys100–Cys105. Residue Gly113 is the site of GPI-anchor amidated glycine attachment. The propeptide at 114 to 135 (STWTMAGVLLFILGSVLLQTLL) is removed in mature form.

It is found in the cell membrane. The chain is Lymphocyte antigen 6B (Ly6b) from Rattus norvegicus (Rat).